The primary structure comprises 754 residues: Protein neuralized (754 aa).

The NHR 1 domain occupies 106–260; it reads PLQFHSVHGD…NCTGIEFLDS (155 aa). Low complexity predominate over residues 280 to 297; sequence QQQQMPQPAANASSALNS. The tract at residues 280-308 is disordered; that stretch reads QQQQMPQPAANASSALNSHHPHQQSRRSL. Phosphoserine occurs at positions 338 and 341. An NHR 2 domain is found at 368-523; sequence PVPFHNTKGR…STQSLRMFRQ (156 aa). The RING-type zinc finger occupies 701 to 742; sequence CTICYENPIDSVLYMCGHMCMCYDCAIEQWRGVGGGQCPLCR.

It localises to the nucleus. In terms of biological role, involved in neurogenesis. Interacts with other neurogenic proteins in the specification of the neuroblast versus epidermoblast cell fate. This is Protein neuralized (neur) from Drosophila melanogaster (Fruit fly).